The chain runs to 199 residues: Protein GrpE (199 aa).

Basic and acidic residues predominate over residues 1–24 (MSKQNKKDWKKFKDEHKEEHKVEN). The segment at 1-52 (MSKQNKKDWKKFKDEHKEEHKVENEILEEETDEESQHQEPALGHPSYTALEE) is disordered.

It belongs to the GrpE family. Homodimer.

It localises to the cytoplasm. Functionally, participates actively in the response to hyperosmotic and heat shock by preventing the aggregation of stress-denatured proteins, in association with DnaK and GrpE. It is the nucleotide exchange factor for DnaK and may function as a thermosensor. Unfolded proteins bind initially to DnaJ; upon interaction with the DnaJ-bound protein, DnaK hydrolyzes its bound ATP, resulting in the formation of a stable complex. GrpE releases ADP from DnaK; ATP binding to DnaK triggers the release of the substrate protein, thus completing the reaction cycle. Several rounds of ATP-dependent interactions between DnaJ, DnaK and GrpE are required for fully efficient folding. This Legionella pneumophila protein is Protein GrpE.